The primary structure comprises 88 residues: MERSATLEMLNVHKPDARQTGDILSRYANALWPPALAYAASVAAGYVFTAGPHGCRCGKAMTEAARVGVFLGVLCALYNWMGSGDSFA.

The next 2 helical transmembrane spans lie at 30–50 (ALWP…VFTA) and 67–87 (VGVF…GDSF).

The protein localises to the host membrane. The sequence is that of Transmembrane protein 069R from Frog virus 3 (isolate Goorha) (FV-3).